Here is a 420-residue protein sequence, read N- to C-terminus: Protein translocase subunit SecF (420 aa).

The next 6 helical transmembrane spans lie at 7–27 (FSLL…AGVL), 250–270 (LLVR…FLYV), 276–296 (WFFA…MVSF), 309–327 (IAAI…VVVF), 358–378 (VVTT…TEGG), and 388–408 (VGMV…IALI).

It belongs to the SecD/SecF family. SecF subfamily. Forms a complex with SecD. Part of the essential Sec protein translocation apparatus which comprises SecA, SecYEG and auxiliary proteins SecDF. Other proteins may also be involved.

It is found in the cell inner membrane. Functionally, part of the Sec protein translocase complex. Interacts with the SecYEG preprotein conducting channel. SecDF uses the proton motive force (PMF) to complete protein translocation after the ATP-dependent function of SecA. In Treponema pallidum (strain Nichols), this protein is Protein translocase subunit SecF.